We begin with the raw amino-acid sequence, 82 residues long: DNA-directed RNA polymerase subunit Rpo5 (82 aa).

It belongs to the archaeal Rpo5/eukaryotic RPB5 RNA polymerase subunit family. Part of the RNA polymerase complex.

The protein resides in the cytoplasm. The catalysed reaction is RNA(n) + a ribonucleoside 5'-triphosphate = RNA(n+1) + diphosphate. In terms of biological role, DNA-dependent RNA polymerase (RNAP) catalyzes the transcription of DNA into RNA using the four ribonucleoside triphosphates as substrates. The chain is DNA-directed RNA polymerase subunit Rpo5 from Pyrococcus horikoshii (strain ATCC 700860 / DSM 12428 / JCM 9974 / NBRC 100139 / OT-3).